An 864-amino-acid chain; its full sequence is MLFPYFPLSELDVSAVRTQKENLKQFELTQFAHYEIYDLITNRTQFCDHLLRDLWLRFGLVKDNTLTLIAVGGYGREEMFPLSDLDFLILTSEQVEAQTEQKIRQFVQFLWDCGFDVGHAVRTLSECEQAGRDNITVATNLLEARYLEGNFSQFQQLDNVLQKADFWPREAFFQAKYQERVERYQRYHNTSYNLEPDIKHSPGGLRDLHLLYWIALRHTGAKNLTDILNSGFIYPQEYAQLLESQQFLFKVRFALHLILKRYDNRLLFERQIRVAELLEFVGPGNQGVEKMMKSFFQALQTISLLSDLLVKHYREHFLQTNEPVQVRLLDKEFQCVNNAICLRQANLFVEQPEQILSLFFHLTQDHQLDIHSSTLRQLHLALEQRSGYLSELPVARERFLRLFNQPGAIARALVPMHKYGVLKAYLPQWHHIEGLMQFDLFHCYTVDEHIVRTLLKLEYFLEAESVVPHPICSQIFSRLTDRTLLYIAALFHDIAKGRGGDHAELGAVDVAQFAQQHGFDQREIHTLTWLVEQHLLMSVTAQRRDIHDPEVVLHFAEAVQNNVRLDYLTCLTVADICATNETLWNSWKRTLIATLYQFTTQQFAQGMDCLLDHAEKIENHRQQALTLLTQNSLLSAVQIEEIWQHCPEEYFLRNTPKQIAWHTELLADNQTELLVKISNRFSEGGTEIFVYCQDQPNLFHKVVTTIGAKKFSIHDAQIITSHDGYVFDSFIITELDGKLVKFDRRRSLEKALMQALNTSKLPTFRATDNPKLQHFHVKTEVRFLKEQRTDQTEMELFALDQTGLLAKVSQVFSELKLNLLNAKITTIGEKAEDFFILTNSEDRALTAEQRQCLTQRLHEVLEPK.

A uridylyltransferase region spans residues methionine 1–leucine 328. Residues leucine 329–threonine 686 form a uridylyl-removing region. One can recognise an HD domain in the interval valine 446–asparagine 562. ACT domains lie at glutamate 687–alanine 766 and glutamate 793–lysine 864.

This sequence belongs to the GlnD family. The cofactor is Mg(2+).

The catalysed reaction is [protein-PII]-L-tyrosine + UTP = [protein-PII]-uridylyl-L-tyrosine + diphosphate. It carries out the reaction [protein-PII]-uridylyl-L-tyrosine + H2O = [protein-PII]-L-tyrosine + UMP + H(+). With respect to regulation, uridylyltransferase (UTase) activity is inhibited by glutamine, while glutamine activates uridylyl-removing (UR) activity. In terms of biological role, modifies, by uridylylation and deuridylylation, the PII regulatory proteins (GlnB and homologs), in response to the nitrogen status of the cell that GlnD senses through the glutamine level. Under low glutamine levels, catalyzes the conversion of the PII proteins and UTP to PII-UMP and PPi, while under higher glutamine levels, GlnD hydrolyzes PII-UMP to PII and UMP (deuridylylation). Thus, controls uridylylation state and activity of the PII proteins, and plays an important role in the regulation of nitrogen assimilation and metabolism. The polypeptide is Bifunctional uridylyltransferase/uridylyl-removing enzyme (Pasteurella multocida (strain Pm70)).